We begin with the raw amino-acid sequence, 363 residues long: Fructose-bisphosphate aldolase (363 aa).

Substrate-binding residues include arginine 56 and lysine 147. The active-site Proton acceptor is glutamate 188. Lysine 230 functions as the Schiff-base intermediate with dihydroxyacetone-P in the catalytic mechanism.

The protein belongs to the class I fructose-bisphosphate aldolase family.

It catalyses the reaction beta-D-fructose 1,6-bisphosphate = D-glyceraldehyde 3-phosphate + dihydroxyacetone phosphate. Its pathway is carbohydrate degradation; glycolysis; D-glyceraldehyde 3-phosphate and glycerone phosphate from D-glucose: step 4/4. This is Fructose-bisphosphate aldolase (FBPA) from Echinococcus multilocularis (Fox tapeworm).